A 78-amino-acid chain; its full sequence is Translational regulator CsrA (78 aa).

This sequence belongs to the CsrA/RsmA family. Homodimer; the beta-strands of each monomer intercalate to form a hydrophobic core, while the alpha-helices form wings that extend away from the core.

It is found in the cytoplasm. Functionally, a translational regulator that binds mRNA to regulate translation initiation and/or mRNA stability. Usually binds in the 5'-UTR at or near the Shine-Dalgarno sequence preventing ribosome-binding, thus repressing translation. Its main target seems to be the major flagellin gene, while its function is anatagonized by FliW. This is Translational regulator CsrA from Desulfovibrio desulfuricans (strain ATCC 27774 / DSM 6949 / MB).